We begin with the raw amino-acid sequence, 303 residues long: MWPLAAALLLGSCCCGSAQLLFSNVNSIEFTSCNETVVIPCIVRNVEAQSTEEMFVKWKLNKSYIFIYDGNKNSTTTDQNFTSAKISVSDLINGIASLKMDKRDAMVGNYTCEVTELSREGKTVIELKNRTVSWFSPNEKILIVIFPILAILLFWGKFGILTLKYKSSHTNKRIILLLVAGLVLTVIVVVGAILLIPGEKPVKNASGLGLIVISTGILILLQYNVFMTAFGMTSFTIAILITQVLGYVLALVGLCLCIMACEPVHGPLLISGLGIIALAELLGLVYMKFVASNQRTIQPPRNR.

A signal peptide spans methionine 1–alanine 18. Position 19 is a pyrrolidone carboxylic acid (glutamine 19). Residues glutamine 19–isoleucine 125 enclose the Ig-like V-type domain. Topologically, residues glutamine 19–lysine 140 are extracellular. Disulfide bonds link cysteine 33/cysteine 261 and cysteine 41/cysteine 112. N-linked (GlcNAc...) asparagine glycans are attached at residues asparagine 34, asparagine 61, asparagine 73, and asparagine 80. A phosphoserine mark is found at serine 87 and serine 89. Asparagine 109 and asparagine 129 each carry an N-linked (GlcNAc...) asparagine glycan. A helical membrane pass occupies residues isoleucine 141–leucine 161. The Cytoplasmic segment spans residues threonine 162–arginine 173. Residues isoleucine 174 to leucine 194 traverse the membrane as a helical segment. The Extracellular segment spans residues leucine 195–serine 206. N-linked (GlcNAc...) asparagine glycosylation is present at asparagine 204. Residues glycine 207–methionine 227 traverse the membrane as a helical segment. The Cytoplasmic segment spans residues threonine 228–alanine 238. The chain crosses the membrane as a helical span at residues isoleucine 239 to methionine 259. Residues alanine 260–glycine 266 lie on the Extracellular side of the membrane. Residues proline 267–methionine 287 form a helical membrane-spanning segment. The Cytoplasmic segment spans residues lysine 288–arginine 303.

As to quaternary structure, monomer. Interacts with THBS1 (via the C-terminal domain). Interacts with SIRPA. Interacts with FAS/CD95; interaction may be enhanced by functional activation. Interacts with SIRPG, UBQLN1 and UBQLN2. May interact with fibrinogen.

It is found in the cell membrane. Adhesive protein that mediates cell-to-cell interactions. Acts as a receptor for thrombospondin THBS1 and as modulator of integrin signaling through the activation of heterotrimeric G proteins. Involved in signal transduction, cardiovascular homeostasis, inflammation, apoptosis, angiogenesis, cellular self-renewal, and immunoregulation. Plays a role in modulating pulmonary endothelin EDN1 signaling. Modulates nitrous oxide (NO) signaling, in response to THBS1, hence playing a role as a pressor agent, supporting blood pressure. Plays an important role in memory formation and synaptic plasticity in the hippocampus. Receptor for SIRPA, binding to which prevents maturation of immature dendritic cells and inhibits cytokine production by mature dendritic cells. Interaction with SIRPG mediates cell-cell adhesion, enhances superantigen-dependent T-cell-mediated proliferation and costimulates T-cell activation. Positively modulates FAS-dependent apoptosis in T-cells, perhaps by enhancing FAS clustering. Plays a role in suppressing angiogenesis and may be involved in metabolic dysregulation during normal aging. In response to THBS1, negatively modulates wound healing. Inhibits stem cell self-renewal, in response to THBS1, probably by regulation of the stem cell transcription factors POU5F1/OCT4, SOX2, MYC/c-Myc and KLF4. May play a role in membrane transport and/or integrin dependent signal transduction. May prevent premature elimination of red blood cells. The sequence is that of Leukocyte surface antigen CD47 (Cd47) from Mus musculus (Mouse).